Reading from the N-terminus, the 119-residue chain is Large ribosomal subunit protein uL22 (119 aa).

This sequence belongs to the universal ribosomal protein uL22 family. In terms of assembly, part of the 50S ribosomal subunit.

Functionally, this protein binds specifically to 23S rRNA; its binding is stimulated by other ribosomal proteins, e.g. L4, L17, and L20. It is important during the early stages of 50S assembly. It makes multiple contacts with different domains of the 23S rRNA in the assembled 50S subunit and ribosome. In terms of biological role, the globular domain of the protein is located near the polypeptide exit tunnel on the outside of the subunit, while an extended beta-hairpin is found that lines the wall of the exit tunnel in the center of the 70S ribosome. The chain is Large ribosomal subunit protein uL22 from Bifidobacterium animalis subsp. lactis (strain AD011).